The chain runs to 209 residues: Small ribosomal subunit protein uS4 (209 aa).

Residues 99 to 161 enclose the S4 RNA-binding domain; sequence CRLDNIAFRL…SSKLVVVEMG (63 aa).

The protein belongs to the universal ribosomal protein uS4 family. In terms of assembly, part of the 30S ribosomal subunit. Contacts protein S5. The interaction surface between S4 and S5 is involved in control of translational fidelity.

Its function is as follows. One of the primary rRNA binding proteins, it binds directly to 16S rRNA where it nucleates assembly of the body of the 30S subunit. In terms of biological role, with S5 and S12 plays an important role in translational accuracy. This Acidobacterium capsulatum (strain ATCC 51196 / DSM 11244 / BCRC 80197 / JCM 7670 / NBRC 15755 / NCIMB 13165 / 161) protein is Small ribosomal subunit protein uS4.